The following is a 636-amino-acid chain: 1-deoxy-D-xylulose-5-phosphate synthase (636 aa).

Residues His-74 and 115–117 each bind thiamine diphosphate; that span reads GHA. Asp-146 lines the Mg(2+) pocket. Thiamine diphosphate-binding positions include 147–148, Asn-175, Tyr-285, and Glu-368; that span reads GA. Asn-175 contributes to the Mg(2+) binding site.

The protein belongs to the transketolase family. DXPS subfamily. In terms of assembly, homodimer. The cofactor is Mg(2+). It depends on thiamine diphosphate as a cofactor.

It carries out the reaction D-glyceraldehyde 3-phosphate + pyruvate + H(+) = 1-deoxy-D-xylulose 5-phosphate + CO2. The protein operates within metabolic intermediate biosynthesis; 1-deoxy-D-xylulose 5-phosphate biosynthesis; 1-deoxy-D-xylulose 5-phosphate from D-glyceraldehyde 3-phosphate and pyruvate: step 1/1. Its function is as follows. Catalyzes the acyloin condensation reaction between C atoms 2 and 3 of pyruvate and glyceraldehyde 3-phosphate to yield 1-deoxy-D-xylulose-5-phosphate (DXP). This chain is 1-deoxy-D-xylulose-5-phosphate synthase, found in Anaeromyxobacter sp. (strain K).